We begin with the raw amino-acid sequence, 259 residues long: Small ribosomal subunit protein uS2 (259 aa).

Residues 228-259 form a disordered region; the sequence is VSFGSEEAEENNQKEDNEEIFEIEDVDESEEM. The segment covering 233-259 has biased composition (acidic residues); sequence EEAEENNQKEDNEEIFEIEDVDESEEM.

Belongs to the universal ribosomal protein uS2 family.

This Thermosipho africanus (strain TCF52B) protein is Small ribosomal subunit protein uS2.